The primary structure comprises 282 residues: Nucleotide-binding protein Ping_2894 (282 aa).

Position 8–15 (8–15 (GRSGSGKT)) interacts with ATP. Residue 56 to 59 (DIRN) participates in GTP binding.

Belongs to the RapZ-like family.

Its function is as follows. Displays ATPase and GTPase activities. This Psychromonas ingrahamii (strain DSM 17664 / CCUG 51855 / 37) protein is Nucleotide-binding protein Ping_2894.